The primary structure comprises 397 residues: Serpin B10 (397 aa).

The interval 62–85 is disordered; the sequence is RDQGVKSSPESEKKRKMEFNSSNS. Basic and acidic residues predominate over residues 70–79; the sequence is PESEKKRKME. The short motif at 74 to 77 is the Nuclear localization signal element; the sequence is KKRK.

The protein belongs to the serpin family. Ov-serpin subfamily.

Its subcellular location is the nucleus. It localises to the cytoplasm. Its function is as follows. Protease inhibitor that may play a role in the regulation of protease activities during hematopoiesis and apoptosis induced by TNF. May regulate protease activities in the cytoplasm and in the nucleus. The sequence is that of Serpin B10 (SERPINB10) from Papio anubis (Olive baboon).